A 976-amino-acid polypeptide reads, in one-letter code: Ephrin type-A receptor 2 (976 aa).

Residues 1 to 23 form the signal peptide; sequence MELWAARACFVLLWGCALAPATA. Residues 1 to 206 form a mediates interaction with CLDN4 region; sequence MELWAARACF…YYKKCPELLQ (206 aa). Over 25-537 the chain is Extracellular; that stretch reads QGKEVVLLDF…SPEGSGSLAV (513 aa). The 179-residue stretch at 28 to 206 folds into the Eph LBD domain; the sequence is EVVLLDFAAA…YYKKCPELLQ (179 aa). Disulfide bonds link C70–C188 and C105–C115. A Fibronectin type-III 1 domain is found at 328–432; the sequence is PPSAPHYLTA…TSRSFRTASV (105 aa). 2 N-linked (GlcNAc...) asparagine glycosylation sites follow: N407 and N435. The region spanning 438-529 is the Fibronectin type-III 2 domain; that stretch reads EPPKVRLEGR…KVHEFQTLSP (92 aa). A helical transmembrane segment spans residues 538–558; the sequence is IGGVAVCVVLLLLLAGAGFFI. Residues 559-976 are Cytoplasmic-facing; that stretch reads HRRRKNLRAR…DQVNTVGIPI (418 aa). At S570 the chain carries Phosphoserine. The residue at position 575 (Y575) is a Phosphotyrosine. S579 is modified (phosphoserine). Residue Y588 is modified to Phosphotyrosine; by autocatalysis. A Phosphotyrosine modification is found at Y594. The tract at residues 606-906 is mediates interaction with ARHGEF16; that stretch reads TEIHPSCVTR…STSGSEGVPF (301 aa). The 263-residue stretch at 613 to 875 folds into the Protein kinase domain; that stretch reads VTRQKVIGAG…DIVSILDKLI (263 aa). Residue 619–627 participates in ATP binding; it reads IGAGEFGEV. The residue at position 628 (Y628) is a Phosphotyrosine. K646 contributes to the ATP binding site. Phosphothreonine is present on T647. Y735 carries the post-translational modification Phosphotyrosine; by autocatalysis. D739 functions as the Proton acceptor in the catalytic mechanism. Y772 is modified (phosphotyrosine). 4 positions are modified to phosphoserine: S869, S892, S897, and S901. Residues 886–976 are negatively regulates interaction with ARHGEF16; the sequence is DFDPRVSIRL…DQVNTVGIPI (91 aa). One can recognise an SAM domain in the interval 904-968; that stretch reads VPFRTVSEWL…AYSLLGLKDQ (65 aa). Y921 is modified (phosphotyrosine; by autocatalysis). Y930 carries the post-translational modification Phosphotyrosine. The PDZ-binding motif lies at 974-976; it reads IPI.

The protein belongs to the protein kinase superfamily. Tyr protein kinase family. Ephrin receptor subfamily. Homodimer. Interacts with SLA. Interacts (phosphorylated form) with VAV2, VAV3 and PI3-kinase p85 subunit (PIK3R1, PIK3R2 or PIK3R3); critical for the EFNA1-induced activation of RAC1 which stimulates cell migration. Interacts with INPPL1; regulates activated EPHA2 endocytosis and degradation. Interacts (inactivated form) with PTK2/FAK1 and interacts (EFNA1 ligand-activated form) with PTPN11; regulates integrin-mediated adhesion. Interacts with ARHGEF16, DOCK4 and ELMO2; mediates ligand-independent activation of RAC1 which stimulates cell migration. Interacts with CLDN4; phosphorylates CLDN4 and may regulate tight junctions. Interacts with ACP1. Interacts with ANKS1A. Interacts with CEMIP. Interacts with NCK1; may regulate EPHA2 activity in cell migration and adhesion. Interacts with TIMD4. Post-translationally, autophosphorylates. Phosphorylated on tyrosine upon binding and activation by EFNA1. Phosphorylated residues Tyr-588 and Tyr-594 are required for binding VAV2 and VAV3 while phosphorylated residues Tyr-735 and Tyr-930 are required for binding PI3-kinase p85 subunit (PIK3R1, PIK3R2 or PIK3R3). These phosphorylated residues are critical for recruitment of VAV2 and VAV3 and PI3-kinase p85 subunit which transduce downstream signaling to activate RAC1 GTPase and cell migration. Dephosphorylation of Tyr-930 by PTPRF prevents the interaction of EPHA2 with NCK1. Phosphorylated at Ser-897 by PKB; serum-induced phosphorylation which targets EPHA2 to the cell leading edge and stimulates cell migration. Phosphorylation by PKB is inhibited by EFNA1-activated EPHA2 which regulates PKB activity via a reciprocal regulatory loop. Phosphorylated at Ser-897 in response to TNF by RPS6KA1 and RPS6KA3; RPS6KA-EPHA2 signaling pathway controls cell migration. Phosphorylated at Ser-897 by PKA; blocks cell retraction induced by EPHA2 kinase activity. Dephosphorylated by ACP1. In terms of processing, ubiquitinated by CHIP/STUB1. Ubiquitination is regulated by the HSP90 chaperone and regulates the receptor stability and activity through proteasomal degradation. ANKS1A prevents ubiquitination and degradation.

The protein localises to the cell membrane. It is found in the cell projection. Its subcellular location is the ruffle membrane. The protein resides in the lamellipodium membrane. It localises to the cell junction. The protein localises to the focal adhesion. The catalysed reaction is L-tyrosyl-[protein] + ATP = O-phospho-L-tyrosyl-[protein] + ADP + H(+). In terms of biological role, receptor tyrosine kinase which binds promiscuously membrane-bound ephrin-A family ligands residing on adjacent cells, leading to contact-dependent bidirectional signaling into neighboring cells. The signaling pathway downstream of the receptor is referred to as forward signaling while the signaling pathway downstream of the ephrin ligand is referred to as reverse signaling. Activated by the ligand ephrin-A1/EFNA1 regulates migration, integrin-mediated adhesion, proliferation and differentiation of cells. Regulates cell adhesion and differentiation through DSG1/desmoglein-1 and inhibition of the ERK1/ERK2 signaling pathway. May also participate in UV radiation-induced apoptosis and have a ligand-independent stimulatory effect on chemotactic cell migration. During development, may function in distinctive aspects of pattern formation and subsequently in development of several fetal tissues. Involved for instance in angiogenesis, in early hindbrain development and epithelial proliferation and branching morphogenesis during mammary gland development. Engaged by the ligand ephrin-A5/EFNA5 may regulate lens fiber cells shape and interactions and be important for lens transparency development and maintenance. With ephrin-A2/EFNA2 may play a role in bone remodeling through regulation of osteoclastogenesis and osteoblastogenesis. The sequence is that of Ephrin type-A receptor 2 (EPHA2) from Macaca fascicularis (Crab-eating macaque).